Consider the following 340-residue polypeptide: MKKKLLVLTMSTLFATQIMNSNHAKASVTESVDKKFVVPESGINKIIPTYNEFKKAPKVNVGNLADNKNFVASEDKLNKIVDSSAASKIVDKNFAVPESKLGNIVPEYKEINNRVNVATNNPASQQVDKHFVAKGPEVNRFITQNKVNHHFITTQTHYKKVITSYKSTHVHKHVNHAKDSINKHFIVKPSESPRYTHPSQSLIIKHHFAVPGYHAHKFVTPGHASIKINHFCVVPQINSFKVIPPYGHNSHRMHVPSFQNNTTATHQNAKVNKAYDYKYFYSYKVVKGVKKYFSFSQSNGYKIGKPSLNIKNVNYQYAVPSYSPTHYVPEFKGSLPAPRV.

A signal peptide spans 1–26 (MKKKLLVLTMSTLFATQIMNSNHAKA).

The protein localises to the cell surface. Its function is as follows. Adhesin that binds to the host cell extracellular matrix proteins fibronectin, fibrinogen, collagen, and vitronectin. The chain is Extracellular matrix protein-binding protein emp (emp) from Staphylococcus aureus (strain MSSA476).